The chain runs to 811 residues: Elongation factor G, mitochondrial (811 aa).

A mitochondrion-targeting transit peptide spans 1–64 (MSAIARAAAR…FQQSFQRRWA (64 aa)). The 299-residue stretch at 96 to 394 (RRQRNVGISA…GVCAYLPNPS (299 aa)) folds into the tr-type G domain. Residues 105-112 (AHIDSGKT), 192-196 (DTPGH), and 246-249 (NKMD) each bind GTP.

Belongs to the TRAFAC class translation factor GTPase superfamily. Classic translation factor GTPase family. EF-G/EF-2 subfamily.

It is found in the mitochondrion. It functions in the pathway protein biosynthesis; polypeptide chain elongation. In terms of biological role, mitochondrial GTPase that catalyzes the GTP-dependent ribosomal translocation step during translation elongation. During this step, the ribosome changes from the pre-translocational (PRE) to the post-translocational (POST) state as the newly formed A-site-bound peptidyl-tRNA and P-site-bound deacylated tRNA move to the P and E sites, respectively. Catalyzes the coordinated movement of the two tRNA molecules, the mRNA and conformational changes in the ribosome. The polypeptide is Elongation factor G, mitochondrial (Cryptococcus neoformans var. neoformans serotype D (strain JEC21 / ATCC MYA-565) (Filobasidiella neoformans)).